Reading from the N-terminus, the 446-residue chain is Tubulin beta-1 chain (446 aa).

GTP is bound by residues Q13, E71, S140, G144, T145, G146, N206, and N228. E71 is a Mg(2+) binding site. Positions 421-446 (VSEYQQYQDASADDGEEYEEDAPMEE) are disordered. Residues 431 to 446 (SADDGEEYEEDAPMEE) are compositionally biased toward acidic residues.

The protein belongs to the tubulin family. In terms of assembly, dimer of alpha and beta chains. A typical microtubule is a hollow water-filled tube with an outer diameter of 25 nm and an inner diameter of 15 nM. Alpha-beta heterodimers associate head-to-tail to form protofilaments running lengthwise along the microtubule wall with the beta-tubulin subunit facing the microtubule plus end conferring a structural polarity. Microtubules usually have 13 protofilaments but different protofilament numbers can be found in some organisms and specialized cells. Requires Mg(2+) as cofactor.

It is found in the cytoplasm. Its subcellular location is the cytoskeleton. Functionally, tubulin is the major constituent of microtubules, a cylinder consisting of laterally associated linear protofilaments composed of alpha- and beta-tubulin heterodimers. Microtubules grow by the addition of GTP-tubulin dimers to the microtubule end, where a stabilizing cap forms. Below the cap, tubulin dimers are in GDP-bound state, owing to GTPase activity of alpha-tubulin. This is Tubulin beta-1 chain (tub1) from Hypocrea rufa (Trichoderma viride).